A 31-amino-acid chain; its full sequence is Cytochrome b6-f complex subunit 6 (31 aa).

A helical transmembrane segment spans residues 4 to 24; that stretch reads LTSYFGFLLAALTITLALFIG.

This sequence belongs to the PetL family. As to quaternary structure, the 4 large subunits of the cytochrome b6-f complex are cytochrome b6, subunit IV (17 kDa polypeptide, PetD), cytochrome f and the Rieske protein, while the 4 small subunits are PetG, PetL, PetM and PetN. The complex functions as a dimer.

The protein localises to the plastid. Its subcellular location is the chloroplast thylakoid membrane. Its function is as follows. Component of the cytochrome b6-f complex, which mediates electron transfer between photosystem II (PSII) and photosystem I (PSI), cyclic electron flow around PSI, and state transitions. PetL is important for photoautotrophic growth as well as for electron transfer efficiency and stability of the cytochrome b6-f complex. The polypeptide is Cytochrome b6-f complex subunit 6 (Triticum aestivum (Wheat)).